Consider the following 256-residue polypeptide: Thiazole synthase (256 aa).

Lys-95 functions as the Schiff-base intermediate with DXP in the catalytic mechanism. Residues Gly-156, 182–183 (AG), and 204–205 (NT) contribute to the 1-deoxy-D-xylulose 5-phosphate site.

It belongs to the ThiG family. Homotetramer. Forms heterodimers with either ThiH or ThiS.

Its subcellular location is the cytoplasm. It catalyses the reaction [ThiS sulfur-carrier protein]-C-terminal-Gly-aminoethanethioate + 2-iminoacetate + 1-deoxy-D-xylulose 5-phosphate = [ThiS sulfur-carrier protein]-C-terminal Gly-Gly + 2-[(2R,5Z)-2-carboxy-4-methylthiazol-5(2H)-ylidene]ethyl phosphate + 2 H2O + H(+). It functions in the pathway cofactor biosynthesis; thiamine diphosphate biosynthesis. Its function is as follows. Catalyzes the rearrangement of 1-deoxy-D-xylulose 5-phosphate (DXP) to produce the thiazole phosphate moiety of thiamine. Sulfur is provided by the thiocarboxylate moiety of the carrier protein ThiS. In vitro, sulfur can be provided by H(2)S. The protein is Thiazole synthase of Escherichia coli O127:H6 (strain E2348/69 / EPEC).